We begin with the raw amino-acid sequence, 120 residues long: Ribosome-binding factor A (120 aa).

The protein belongs to the RbfA family. In terms of assembly, monomer. Binds 30S ribosomal subunits, but not 50S ribosomal subunits or 70S ribosomes.

It is found in the cytoplasm. One of several proteins that assist in the late maturation steps of the functional core of the 30S ribosomal subunit. Associates with free 30S ribosomal subunits (but not with 30S subunits that are part of 70S ribosomes or polysomes). Required for efficient processing of 16S rRNA. May interact with the 5'-terminal helix region of 16S rRNA. The polypeptide is Ribosome-binding factor A (Limosilactobacillus fermentum (strain NBRC 3956 / LMG 18251) (Lactobacillus fermentum)).